The sequence spans 375 residues: Stomatin-2 (375 aa).

Positions methionine 1–glycine 75 are disordered. Over residues serine 11–asparagine 50 the composition is skewed to low complexity. Residues glycine 120–phenylalanine 140 form a helical membrane-spanning segment.

This sequence belongs to the band 7/mec-2 family.

The protein localises to the membrane. May be involved in cilia-related function. The sequence is that of Stomatin-2 (sto-2) from Caenorhabditis elegans.